The chain runs to 433 residues: Probable mannose-6-phosphate isomerase (433 aa).

Gln-103, His-105, Glu-130, and His-277 together coordinate Zn(2+). Arg-296 is a catalytic residue.

The protein belongs to the mannose-6-phosphate isomerase type 1 family. Zn(2+) serves as cofactor.

Its subcellular location is the cytoplasm. The catalysed reaction is D-mannose 6-phosphate = D-fructose 6-phosphate. The protein operates within nucleotide-sugar biosynthesis; GDP-alpha-D-mannose biosynthesis; alpha-D-mannose 1-phosphate from D-fructose 6-phosphate: step 1/2. Involved in the synthesis of the GDP-mannose and dolichol-phosphate-mannose required for a number of critical mannosyl transfer reactions. The sequence is that of Probable mannose-6-phosphate isomerase (PMIH) from Echinococcus multilocularis (Fox tapeworm).